A 267-amino-acid chain; its full sequence is Octanoyltransferase (267 aa).

Residues 1-30 (MPTGKLRQKPPYAAIMTNSPVTPSTETQQP) form a disordered region. A compositionally biased stretch (polar residues) spans 16-28 (MTNSPVTPSTETQ). Positions 77–265 (GTASELVWLV…AFESVFGPRQ (189 aa)) constitute a BPL/LPL catalytic domain. Substrate contacts are provided by residues 116-123 (RGGEYTYH), 196-198 (AIG), and 209-211 (GIA). Cysteine 227 acts as the Acyl-thioester intermediate in catalysis.

This sequence belongs to the LipB family.

Its subcellular location is the cytoplasm. It carries out the reaction octanoyl-[ACP] + L-lysyl-[protein] = N(6)-octanoyl-L-lysyl-[protein] + holo-[ACP] + H(+). It functions in the pathway protein modification; protein lipoylation via endogenous pathway; protein N(6)-(lipoyl)lysine from octanoyl-[acyl-carrier-protein]: step 1/2. Catalyzes the transfer of endogenously produced octanoic acid from octanoyl-acyl-carrier-protein onto the lipoyl domains of lipoate-dependent enzymes. Lipoyl-ACP can also act as a substrate although octanoyl-ACP is likely to be the physiological substrate. This chain is Octanoyltransferase, found in Brucella abortus biovar 1 (strain 9-941).